The following is a 517-amino-acid chain: Membrane-bound lytic murein transglycosylase F (517 aa).

Positions 1–32 are cleaved as a signal peptide; that stretch reads MKKFKINYLLIGIVTLLLAAALWPSIPWFGKA. Residues 33–269 are non-LT domain; that stretch reads ENRIAAIQSR…RLEEKYLGHG (237 aa). The segment at 270–517 is LT domain; that stretch reads GDFDYVDTRS…PNTLVQAPRR (248 aa). Residue glutamate 314 is part of the active site.

This sequence in the N-terminal section; belongs to the bacterial solute-binding protein 3 family. In the C-terminal section; belongs to the transglycosylase Slt family.

The protein resides in the cell outer membrane. It carries out the reaction Exolytic cleavage of the (1-&gt;4)-beta-glycosidic linkage between N-acetylmuramic acid (MurNAc) and N-acetylglucosamine (GlcNAc) residues in peptidoglycan, from either the reducing or the non-reducing ends of the peptidoglycan chains, with concomitant formation of a 1,6-anhydrobond in the MurNAc residue.. Functionally, murein-degrading enzyme that degrades murein glycan strands and insoluble, high-molecular weight murein sacculi, with the concomitant formation of a 1,6-anhydromuramoyl product. Lytic transglycosylases (LTs) play an integral role in the metabolism of the peptidoglycan (PG) sacculus. Their lytic action creates space within the PG sacculus to allow for its expansion as well as for the insertion of various structures such as secretion systems and flagella. The chain is Membrane-bound lytic murein transglycosylase F from Enterobacter sp. (strain 638).